Here is a 927-residue protein sequence, read N- to C-terminus: Phosphoenolpyruvate carboxylase (927 aa).

Catalysis depends on residues His160 and Lys589.

It belongs to the PEPCase type 1 family. Requires Mg(2+) as cofactor.

It catalyses the reaction oxaloacetate + phosphate = phosphoenolpyruvate + hydrogencarbonate. Its function is as follows. Forms oxaloacetate, a four-carbon dicarboxylic acid source for the tricarboxylic acid cycle. The polypeptide is Phosphoenolpyruvate carboxylase (Rhodopseudomonas palustris (strain BisA53)).